Here is a 476-residue protein sequence, read N- to C-terminus: tRNA (cytosine(72)-C(5))-methyltransferase NSUN6 (476 aa).

The PUA domain occupies 111 to 203; that stretch reads QGEVIVGAQC…IGIRMTEPIY (93 aa). S-adenosyl-L-methionine contacts are provided by residues 242 to 248, Asp-266, Asp-293, and Asp-323; that span reads CAAPGGK. Catalysis depends on Cys-373, which acts as the Nucleophile. Lys-419 carries the N6-acetyllysine modification.

This sequence belongs to the class I-like SAM-binding methyltransferase superfamily. RsmB/NOP family.

It is found in the cytoplasm. It catalyses the reaction cytidine(72) in tRNA(Thr) + S-adenosyl-L-methionine = 5-methylcytidine(72) in tRNA(Thr) + S-adenosyl-L-homocysteine + H(+). It carries out the reaction cytidine(72) in tRNA(Cys) + S-adenosyl-L-methionine = 5-methylcytidine(72) in tRNA(Cys) + S-adenosyl-L-homocysteine + H(+). Functionally, S-adenosyl-L-methionine-dependent methyltransferase that specifically methylates the C5 position of cytosine 72 in tRNA(Thr)(TGT) and tRNA(Cys)(GCA). In vitro also methylates tRNA(Thr)(AGT). Methylation requires, in the acceptor stem region, the presence of the 3'-CCA terminus, the target site C72, the discriminator base U73, and the second and third base pairs (2:71 and 3:70) in the tRNA substrates. The chain is tRNA (cytosine(72)-C(5))-methyltransferase NSUN6 from Mus musculus (Mouse).